The chain runs to 142 residues: Putative pre-16S rRNA nuclease (142 aa).

Belongs to the YqgF nuclease family.

The protein localises to the cytoplasm. Functionally, could be a nuclease involved in processing of the 5'-end of pre-16S rRNA. This chain is Putative pre-16S rRNA nuclease, found in Staphylococcus aureus (strain bovine RF122 / ET3-1).